The sequence spans 254 residues: Serine acetyltransferase (254 aa).

Belongs to the transferase hexapeptide repeat family.

It is found in the cytoplasm. It catalyses the reaction L-serine + acetyl-CoA = O-acetyl-L-serine + CoA. The protein operates within amino-acid biosynthesis; L-cysteine biosynthesis; L-cysteine from L-serine: step 1/2. The chain is Serine acetyltransferase (cysE) from Buchnera aphidicola subsp. Baizongia pistaciae (strain Bp).